A 1004-amino-acid chain; its full sequence is Glutamate [NMDA] receptor subunit 1 (1004 aa).

Positions 1–39 are cleaved as a signal peptide; that stretch reads MAGTDSPAAARFVYRCLLFAPAIVVGLLLPLTLPPIAAA. Over 40-585 the chain is Extracellular; it reads QRHTASDNPS…TLVSFLQPFS (546 aa). N-linked (GlcNAc...) asparagine glycans are attached at residues Asn270, Asn326, Asn357, Asn409, Asn466, Asn493, and Asn513. Residues 542–544 and Arg549 each bind glycine; that span reads PLT. Residues 586 to 606 traverse the membrane as a helical segment; the sequence is NTLWILVMVSVHVVALVLYLL. Topologically, residues 607 to 663 are cytoplasmic; that stretch reads DRFSPFGRFKLSHSDSNEEKALNLSSAVWFAWGVLLNSGIGEGTPRSFSARVLGMVW. The chain crosses the membrane as a helical span at residues 664–684; sequence AGFAMIIVASYTANLAAFLVL. Over 685-843 the chain is Extracellular; that stretch reads ERPKTKLSGI…KTPNTLGLKN (159 aa). N-linked (GlcNAc...) asparagine glycosylation occurs at Asn705. Residues Ser715 and Asp759 each coordinate glycine. Residues 844-864 traverse the membrane as a helical segment; sequence MAGVFILVGVGIAGGVGLIII. The Cytoplasmic segment spans residues 865–1004; that stretch reads EVIYKKHQVK…YTSDVSHLVV (140 aa). The segment at 980-1004 is disordered; that stretch reads TRPQQNILPPRYSPGYTSDVSHLVV. The span at 994–1004 shows a compositional bias: polar residues; the sequence is GYTSDVSHLVV.

This sequence belongs to the glutamate-gated ion channel (TC 1.A.10.1) family. As to quaternary structure, forms a heteromeric NMDA channel with Nmdar2.

It is found in the cell membrane. The protein resides in the postsynaptic cell membrane. Its subcellular location is the postsynaptic density. Its function is as follows. NMDA receptor subtype of glutamate-gated ion channels with high calcium permeability and voltage-dependent sensitivity to magnesium. Mediated by glycine. This protein plays a key role in synaptic plasticity, synaptogenesis, excitotoxicity, memory acquisition and learning. It mediates neuronal functions in glutamate neurotransmission. Is involved in the cell surface targeting of NMDA receptors. Plays a role in associative learning and in long-term memory consolidation. The polypeptide is Glutamate [NMDA] receptor subunit 1 (Drosophila persimilis (Fruit fly)).